The primary structure comprises 306 residues: 26S proteasome regulatory subunit RPN11 (306 aa).

Positions 27-162 constitute an MPN domain; sequence VYISSIALLK…IDAFRLIDTG (136 aa). Residues histidine 109, histidine 111, and aspartate 122 each contribute to the Zn(2+) site. A JAMM motif motif is present at residues 109-122; that stretch reads HSHPGFGCWLSSVD.

It belongs to the peptidase M67A family.

In terms of biological role, acts as a regulatory subunit of the 26 proteasome which is involved in the ATP-dependent degradation of ubiquitinated proteins. The protein is 26S proteasome regulatory subunit RPN11 (RPN11) of Candida glabrata (strain ATCC 2001 / BCRC 20586 / JCM 3761 / NBRC 0622 / NRRL Y-65 / CBS 138) (Yeast).